We begin with the raw amino-acid sequence, 275 residues long: 2-dehydro-3-deoxyphosphooctonate aldolase (275 aa).

It belongs to the KdsA family.

The protein localises to the cytoplasm. The catalysed reaction is D-arabinose 5-phosphate + phosphoenolpyruvate + H2O = 3-deoxy-alpha-D-manno-2-octulosonate-8-phosphate + phosphate. Its pathway is carbohydrate biosynthesis; 3-deoxy-D-manno-octulosonate biosynthesis; 3-deoxy-D-manno-octulosonate from D-ribulose 5-phosphate: step 2/3. It participates in bacterial outer membrane biogenesis; lipopolysaccharide biosynthesis. The sequence is that of 2-dehydro-3-deoxyphosphooctonate aldolase from Francisella tularensis subsp. novicida (strain U112).